The primary structure comprises 378 residues: Histidinol-phosphate aminotransferase (378 aa).

Positions 1–20 (MSVSAKETQRHPARPEPRPG) are disordered. Positions 7-17 (ETQRHPARPEP) are enriched in basic and acidic residues. An N6-(pyridoxal phosphate)lysine modification is found at K232.

This sequence belongs to the class-II pyridoxal-phosphate-dependent aminotransferase family. Histidinol-phosphate aminotransferase subfamily. Homodimer. The cofactor is pyridoxal 5'-phosphate.

The catalysed reaction is L-histidinol phosphate + 2-oxoglutarate = 3-(imidazol-4-yl)-2-oxopropyl phosphate + L-glutamate. The protein operates within amino-acid biosynthesis; L-histidine biosynthesis; L-histidine from 5-phospho-alpha-D-ribose 1-diphosphate: step 7/9. This Azorhizobium caulinodans (strain ATCC 43989 / DSM 5975 / JCM 20966 / LMG 6465 / NBRC 14845 / NCIMB 13405 / ORS 571) protein is Histidinol-phosphate aminotransferase.